Consider the following 91-residue polypeptide: CRISPR-associated endoribonuclease Cas2 (91 aa).

Asp-14 provides a ligand contact to Mg(2+).

Belongs to the CRISPR-associated endoribonuclease Cas2 protein family. In terms of assembly, homodimer, forms a heterotetramer with a Cas1 homodimer. The cofactor is Mg(2+).

Functionally, CRISPR (clustered regularly interspaced short palindromic repeat), is an adaptive immune system that provides protection against mobile genetic elements (viruses, transposable elements and conjugative plasmids). CRISPR clusters contain sequences complementary to antecedent mobile elements and target invading nucleic acids. CRISPR clusters are transcribed and processed into CRISPR RNA (crRNA). Functions as a ssRNA-specific endoribonuclease. Involved in the integration of spacer DNA into the CRISPR cassette. The chain is CRISPR-associated endoribonuclease Cas2 from Nanoarchaeum equitans (strain Kin4-M).